Consider the following 322-residue polypeptide: Putative membrane-bound redox modulator Alx (322 aa).

At 1–6 the chain is on the periplasmic side; that stretch reads MNTVGT. A helical transmembrane segment spans residues 7–27; sequence PLLWGGFAVVVVIMLSIDLLL. At 28–43 the chain is on the cytoplasmic side; it reads QGRRGAHAMSMKQAAG. The chain crosses the membrane as a helical span at residues 44–64; the sequence is WSILWVTLSLLFNAAFWWYLA. At 65 to 89 the chain is on the periplasmic side; sequence ETQGREVADPQALAFLTGYLIEKSL. Residues 90–110 traverse the membrane as a helical segment; that stretch reads AVDNVFVWLMLFSYFSVPPAL. The Cytoplasmic portion of the chain corresponds to 111–113; it reads QRR. Residues 114-134 form a helical membrane-spanning segment; it reads VLVYGVLGAIVLRTIMIFAGT. A topological domain (periplasmic) is located at residue tryptophan 135. Residues 136–156 traverse the membrane as a helical segment; sequence LITQFEWLLYVFGAFLLFTGV. The Cytoplasmic portion of the chain corresponds to 157-198; the sequence is KMALAKEDESGIGEKPMVRWLRGHLRMTDTIENEHFFVRKNG. The chain crosses the membrane as a helical span at residues 199–219; that stretch reads LLYATPLLLVLIMVEFSDVIF. Over 220–225 the chain is Periplasmic; the sequence is AVDSIP. Residues 226 to 246 form a helical membrane-spanning segment; that stretch reads AIFAVTTDPFIVLTSNLFAIL. Residues 247–261 are Cytoplasmic-facing; it reads GLRAMYFLLSGVAER. Residues 262–282 traverse the membrane as a helical segment; the sequence is FSMLKYGLAVILVFIGIKMLI. Residues 283–286 are Periplasmic-facing; that stretch reads VDFY. A helical membrane pass occupies residues 287 to 307; that stretch reads HIPIAISLGVVFGILTITLVI. Residues 308-321 lie on the Cytoplasmic side of the membrane; that stretch reads NTWVNHQRDKKLRA.

This sequence belongs to the TerC family.

It localises to the cell inner membrane. Has been proposed to be a redox modulator. The chain is Putative membrane-bound redox modulator Alx (alx) from Salmonella typhi.